The chain runs to 256 residues: Probable cyclic nucleotide phosphodiesterase Fisuc_1441/FSU_1912 (256 aa).

Fe cation contacts are provided by aspartate 20, histidine 22, aspartate 59, asparagine 89, histidine 156, histidine 196, and histidine 198. AMP contacts are provided by residues histidine 22, aspartate 59, and 89-90 (NH). Histidine 198 is an AMP binding site.

The protein belongs to the cyclic nucleotide phosphodiesterase class-III family. The cofactor is Fe(2+).

The protein is Probable cyclic nucleotide phosphodiesterase Fisuc_1441/FSU_1912 of Fibrobacter succinogenes (strain ATCC 19169 / S85).